Here is an 82-residue protein sequence, read N- to C-terminus: Precursor of CEP3 (82 aa).

The signal sequence occupies residues M1 to G24. Positions R25 to D63 are excised as a propeptide. Residues A40–N82 are disordered. 3 positions are modified to hydroxyproline: P67, P70, and P74. A propeptide spanning residues S79–N82 is cleaved from the precursor.

The protein belongs to the C-terminally encoded plant signaling peptide (CEP) family. Interacts with the CEP receptor CEPR1. In terms of processing, the mature small signaling peptide is generated by proteolytic processing of the longer precursor. Mostly expressed in roots. Present in lateral roots (especially in vasculature), root-hypocotyl junction and cotyledons.

It localises to the secreted. Its subcellular location is the extracellular space. The protein localises to the apoplast. Functionally, extracellular signaling peptide that represses primary root growth rate and significantly inhibits lateral root formation. Promotes shoot growth. Modulates leaf morphology. Regulates systemic nitrogen (N)-demand signaling. Mediates systemic up-regulation of genes involved in N uptake and assimilation pathways. The sequence is that of Precursor of CEP3 from Arabidopsis thaliana (Mouse-ear cress).